The primary structure comprises 603 residues: Myotubularin (603 aa).

The segment covering 1 to 13 (MASASTSKYNSHS) has biased composition (polar residues). The segment at 1–25 (MASASTSKYNSHSLENESIKRTSRD) is disordered. Ser-13 and Ser-18 each carry phosphoserine. Basic and acidic residues predominate over residues 14–25 (LENESIKRTSRD). The GRAM domain maps to 29-97 (RDLTEAVPRL…GVISRIEKMG (69 aa)). The region spanning 163-538 (GWTVYNPVEE…RHLELWVNYY (376 aa)) is the Myotubularin phosphatase domain. 3 residues coordinate a 1,2-diacyl-sn-glycero-3-phospho-(1D-myo-inositol-3,5-bisphosphate): Asn-288, Asn-313, and Ile-314. A 1,2-diacyl-sn-glycero-3-phospho-(1D-myo-inositol-3-phosphate) is bound by residues Asn-288, Asn-313, and Ile-314. Cys-375 serves as the catalytic Phosphocysteine intermediate. A 1,2-diacyl-sn-glycero-3-phospho-(1D-myo-inositol-3,5-bisphosphate)-binding residues include Ser-376, Asp-377, Gly-378, Trp-379, Asp-380, Arg-381, Lys-417, and Arg-421. Ser-376, Asp-377, Gly-378, Trp-379, Asp-380, and Arg-381 together coordinate a 1,2-diacyl-sn-glycero-3-phospho-(1D-myo-inositol-3-phosphate). Position 421 (Arg-421) interacts with a 1,2-diacyl-sn-glycero-3-phospho-(1D-myo-inositol-3-phosphate). At Thr-495 the chain carries Phosphothreonine. The segment at 579–603 (SAKLSDPPTSPSSPSQMMPHVQTHF) is disordered. Position 588 is a phosphoserine (Ser-588).

This sequence belongs to the protein-tyrosine phosphatase family. Non-receptor class myotubularin subfamily. Heterodimer with MTMR12. Interacts with KMT2A/MLL1 (via SET domain). Interacts with DES in skeletal muscle but not in cardiac muscle. Interacts with SPEG.

It is found in the cytoplasm. The protein resides in the cell membrane. The protein localises to the cell projection. Its subcellular location is the filopodium. It localises to the ruffle. It is found in the late endosome. The protein resides in the myofibril. The protein localises to the sarcomere. It catalyses the reaction a 1,2-diacyl-sn-glycero-3-phospho-(1D-myo-inositol-3-phosphate) + H2O = a 1,2-diacyl-sn-glycero-3-phospho-(1D-myo-inositol) + phosphate. The catalysed reaction is a 1,2-diacyl-sn-glycero-3-phospho-(1D-myo-inositol-3,5-bisphosphate) + H2O = a 1,2-diacyl-sn-glycero-3-phospho-(1D-myo-inositol-5-phosphate) + phosphate. It carries out the reaction 1,2-dioctanoyl-sn-glycero-3-phospho-(1-D-myo-inositol-3-phosphate) + H2O = 1,2-dioctanoyl-sn-glycero-3-phospho-(1D-myo-inositol) + phosphate. The enzyme catalyses 1,2-dioctanoyl-sn-glycero-3-phospho-(1D-myo-inositol-3,5-bisphosphate) + H2O = 1,2-dioctanoyl-sn-glycero-3-phospho-(1D-myo-inositol-5-phosphate) + phosphate. It catalyses the reaction 1,2-dihexadecanoyl-sn-glycero-3-phospho-(1D-myo-inositol-3,5-phosphate) + H2O = 1,2-dihexadecanoyl-sn-glycero-3-phospho-(1D-myo-inositol-5-phosphate) + phosphate. Its activity is regulated as follows. Allosterically activated by phosphatidylinositol 5-phosphate (PI5P). In terms of biological role, lipid phosphatase which dephosphorylates phosphatidylinositol 3-monophosphate (PI3P) and phosphatidylinositol 3,5-bisphosphate (PI(3,5)P2). Has also been shown to dephosphorylate phosphotyrosine- and phosphoserine-containing peptides. Negatively regulates EGFR degradation through regulation of EGFR trafficking from the late endosome to the lysosome. Plays a role in vacuolar formation and morphology. Regulates desmin intermediate filament assembly and architecture. Plays a role in mitochondrial morphology and positioning. Required for skeletal muscle maintenance but not for myogenesis. In skeletal muscles, stabilizes MTMR12 protein levels. The protein is Myotubularin of Pongo abelii (Sumatran orangutan).